The following is a 550-amino-acid chain: Medium-chain acyl-CoA ligase Mig (550 aa).

The signal sequence occupies residues 1–19; the sequence is MSDTTTAFTVPAVAKAVAA.

Belongs to the ATP-dependent AMP-binding enzyme family.

It localises to the secreted. The protein localises to the cell wall. The enzyme catalyses a medium-chain fatty acid + ATP + CoA = a medium-chain fatty acyl-CoA + AMP + diphosphate. It carries out the reaction hexanoate + ATP + CoA = hexanoyl-CoA + AMP + diphosphate. The catalysed reaction is heptanoate + ATP + CoA = heptanoyl-CoA + AMP + diphosphate. It catalyses the reaction octanoate + ATP + CoA = octanoyl-CoA + AMP + diphosphate. The enzyme catalyses decanoate + ATP + CoA = decanoyl-CoA + AMP + diphosphate. It carries out the reaction dodecanoate + ATP + CoA = dodecanoyl-CoA + AMP + diphosphate. The catalysed reaction is tetradecanoate + ATP + CoA = tetradecanoyl-CoA + AMP + diphosphate. It catalyses the reaction (9Z)-octadecenoate + ATP + CoA = (9Z)-octadecenoyl-CoA + AMP + diphosphate. The enzyme catalyses (9Z,12Z,15Z)-octadecatrienoate + ATP + CoA = (9Z,12Z,15Z)-octadecatrienoyl-CoA + AMP + diphosphate. It carries out the reaction (5Z,8Z,11Z,14Z)-eicosatetraenoate + ATP + CoA = (5Z,8Z,11Z,14Z)-eicosatetraenoyl-CoA + AMP + diphosphate. The protein operates within lipid metabolism; fatty acid metabolism. Its activity is regulated as follows. Inhibited by 2-hydroxydodecanoic acid, a typical inhibitor of medium-chain acyl-CoA synthetases. Catalyzes the activation of medium-chain fatty acids as acyl-coenzyme A (acyl-CoA). Shows maximal activity with saturated fatty acids of medium-chain length between C6 and C12. Has lower activity with tridecanoic acid (C13), tetradecanoic acid (C14) and with unsaturated fatty acids like oleic acid (C18:1), linolenic acid (C18:3) and arachidonic acid (C20:4). Shows weak activity with some aromatic carbon acids. Involved in the metabolism of fatty acid during mycobacterial survival in macrophages. The protein is Medium-chain acyl-CoA ligase Mig of Mycobacterium avium.